A 310-amino-acid polypeptide reads, in one-letter code: uncharacterized protein (310 aa).

2 disordered regions span residues 22-163 and 178-209; these read LARQ…PVEH and EAEA…VEGD. 2 stretches are compositionally biased toward basic and acidic residues: residues 56–66 and 183–197; these read IIRDDHHHAGP and TEVR…ERHA. Over residues 198-209 the composition is skewed to low complexity; the sequence is AAAAAGTDVEGD. Helical transmembrane passes span 231–251, 257–277, and 286–306; these read ALVV…FIAF, WNSI…VVSV, and IAST…PLAL.

The protein to M.leprae ML2433.

It is found in the cell membrane. This is an uncharacterized protein from Mycobacterium tuberculosis (strain CDC 1551 / Oshkosh).